Consider the following 318-residue polypeptide: Ribosomal RNA small subunit methyltransferase H (318 aa).

S-adenosyl-L-methionine contacts are provided by residues 34-36 (GGH), D53, F82, D103, and Q110.

Belongs to the methyltransferase superfamily. RsmH family.

It localises to the cytoplasm. It carries out the reaction cytidine(1402) in 16S rRNA + S-adenosyl-L-methionine = N(4)-methylcytidine(1402) in 16S rRNA + S-adenosyl-L-homocysteine + H(+). Specifically methylates the N4 position of cytidine in position 1402 (C1402) of 16S rRNA. This chain is Ribosomal RNA small subunit methyltransferase H, found in Limosilactobacillus reuteri (strain DSM 20016) (Lactobacillus reuteri).